A 457-amino-acid polypeptide reads, in one-letter code: ADP-dependent glucose/glucosamine kinase (457 aa).

The ADPK domain occupies 5–457; that stretch reads TNWESLYEKA…SAFVSEFSLH (453 aa). D-glucose-binding positions include Asp-37, Glu-91, 115-116, and His-179; that span reads GQ. Mg(2+) is bound at residue Glu-269. Asn-295 contributes to the ADP binding site. Glu-298 provides a ligand contact to Mg(2+). ADP contacts are provided by residues 345–346, Val-432, and Gly-442; that span reads HT. Asp-443 is a binding site for D-glucose. Asp-443 is a binding site for Mg(2+). Residue Asp-443 is the Proton acceptor of the active site.

Belongs to the ADP-dependent glucokinase family. Requires Mg(2+) as cofactor.

It localises to the cytoplasm. It carries out the reaction D-glucose + ADP = D-glucose 6-phosphate + AMP + H(+). The catalysed reaction is D-glucosamine + ADP = D-glucosamine 6-phosphate + AMP + H(+). Its pathway is carbohydrate degradation; glycolysis. Its activity is regulated as follows. Inhibited by 8-bromoadenosine phosphate (8-Br-AMP). Functionally, catalyzes the ADP-dependent phosphorylation of D-glucose to D-glucose 6-phosphate and glucosamine to glucosamine 6-phosphate. The polypeptide is ADP-dependent glucose/glucosamine kinase (Pyrococcus horikoshii (strain ATCC 700860 / DSM 12428 / JCM 9974 / NBRC 100139 / OT-3)).